The sequence spans 281 residues: MEMO1 family protein Pars_0062 (281 aa).

This sequence belongs to the MEMO1 family.

The polypeptide is MEMO1 family protein Pars_0062 (Pyrobaculum arsenaticum (strain DSM 13514 / JCM 11321 / PZ6)).